A 472-amino-acid polypeptide reads, in one-letter code: Siroheme synthase (472 aa).

The tract at residues 1-203 (MNYLPIFIDI…GKIQEAKADL (203 aa)) is precorrin-2 dehydrogenase /sirohydrochlorin ferrochelatase. NAD(+)-binding positions include 22–23 (DI) and 43–44 (KS). At S128 the chain carries Phosphoserine. Positions 216-472 (GEVYLVGGGP…SSKKSYLFGG (257 aa)) are uroporphyrinogen-III C-methyltransferase. P225 contributes to the S-adenosyl-L-methionine binding site. D248 (proton acceptor) is an active-site residue. K270 functions as the Proton donor in the catalytic mechanism. Residues 301–303 (GGD), I306, 331–332 (TA), M383, and G412 contribute to the S-adenosyl-L-methionine site.

This sequence in the N-terminal section; belongs to the precorrin-2 dehydrogenase / sirohydrochlorin ferrochelatase family. The protein in the C-terminal section; belongs to the precorrin methyltransferase family.

It carries out the reaction uroporphyrinogen III + 2 S-adenosyl-L-methionine = precorrin-2 + 2 S-adenosyl-L-homocysteine + H(+). It catalyses the reaction precorrin-2 + NAD(+) = sirohydrochlorin + NADH + 2 H(+). The catalysed reaction is siroheme + 2 H(+) = sirohydrochlorin + Fe(2+). It functions in the pathway cofactor biosynthesis; adenosylcobalamin biosynthesis; precorrin-2 from uroporphyrinogen III: step 1/1. Its pathway is cofactor biosynthesis; adenosylcobalamin biosynthesis; sirohydrochlorin from precorrin-2: step 1/1. It participates in porphyrin-containing compound metabolism; siroheme biosynthesis; precorrin-2 from uroporphyrinogen III: step 1/1. The protein operates within porphyrin-containing compound metabolism; siroheme biosynthesis; siroheme from sirohydrochlorin: step 1/1. It functions in the pathway porphyrin-containing compound metabolism; siroheme biosynthesis; sirohydrochlorin from precorrin-2: step 1/1. Functionally, multifunctional enzyme that catalyzes the SAM-dependent methylations of uroporphyrinogen III at position C-2 and C-7 to form precorrin-2 via precorrin-1. Then it catalyzes the NAD-dependent ring dehydrogenation of precorrin-2 to yield sirohydrochlorin. Finally, it catalyzes the ferrochelation of sirohydrochlorin to yield siroheme. This is Siroheme synthase from Ruthia magnifica subsp. Calyptogena magnifica.